The following is a 577-amino-acid chain: Proline--tRNA ligase (577 aa).

It belongs to the class-II aminoacyl-tRNA synthetase family. ProS type 1 subfamily. In terms of assembly, homodimer.

Its subcellular location is the cytoplasm. It carries out the reaction tRNA(Pro) + L-proline + ATP = L-prolyl-tRNA(Pro) + AMP + diphosphate. Catalyzes the attachment of proline to tRNA(Pro) in a two-step reaction: proline is first activated by ATP to form Pro-AMP and then transferred to the acceptor end of tRNA(Pro). As ProRS can inadvertently accommodate and process non-cognate amino acids such as alanine and cysteine, to avoid such errors it has two additional distinct editing activities against alanine. One activity is designated as 'pretransfer' editing and involves the tRNA(Pro)-independent hydrolysis of activated Ala-AMP. The other activity is designated 'posttransfer' editing and involves deacylation of mischarged Ala-tRNA(Pro). The misacylated Cys-tRNA(Pro) is not edited by ProRS. This Marinobacter nauticus (strain ATCC 700491 / DSM 11845 / VT8) (Marinobacter aquaeolei) protein is Proline--tRNA ligase.